We begin with the raw amino-acid sequence, 466 residues long: MSIATVAQAKDVRGLNLVAAHSHITGLGLEPNSLTPKENAQGMVGQVKARRAAAVVLQMIKDGKIAGRSVLLAGPPSTGKTAIAMGISQSLGSDVPFTSLAGSEIYSLELSKTEALNQAFRKSIGVRIKETTDIIEGEVVEIQIDRSLSGGHKQGKLTIKTTDMETIYDLGHKMIDSLSNEKVTAGDVISIDKASGRITKLGRSFARARDYDALGADTKFVQCPEGELQQRKEVIHTVSLHEIDVINSRSQGFLALFSGDTGEIRPEVREQINTKVAEWKEEGKAEIVPGVLFIDEVHMLDMECFSFINRALEDDMAPIVIMATNRGQSTTRGTDYKSPHGLPVDLLDRVIIIPTSPYSPDEVKQILQIRANEEEVELSPEALEILTSIGADTSLRYGSNLISVSHMLAQKRKASSVGLEDVKRAYSLFLDTARSVQFLSSSNNYVGEDGTAKLGEREKDAMDTSA.

74–81 lines the ATP pocket; that stretch reads GPPSTGKT.

The protein belongs to the RuvB family. As to quaternary structure, may form heterododecamers with RVB1. Component of the SWR1 chromatin remodeling complex, the INO80 chromatin remodeling complex, and of the R2TP complex.

It localises to the nucleus. The catalysed reaction is ATP + H2O = ADP + phosphate + H(+). DNA helicase which participates in several chromatin remodeling complexes, including the SWR1 and the INO80 complexes. The SWR1 complex mediates the ATP-dependent exchange of histone H2A for the H2A variant HZT1 leading to transcriptional regulation of selected genes by chromatin remodeling. The INO80 complex remodels chromatin by shifting nucleosomes and is involved in DNA repair. Also involved in pre-rRNA processing. This chain is RuvB-like helicase 2 (RVB2), found in Yarrowia lipolytica (strain CLIB 122 / E 150) (Yeast).